The primary structure comprises 76 residues: Ovarian cancer-related protein 1 (76 aa).

This chain is Ovarian cancer-related protein 1 (OCR1), found in Homo sapiens (Human).